Consider the following 450-residue polypeptide: tRNA modification GTPase MnmE (450 aa).

Lysine 21, glutamate 78, and lysine 117 together coordinate (6S)-5-formyl-5,6,7,8-tetrahydrofolate. Residues 213-376 form the TrmE-type G domain; it reads GHALSIVGKP…LSQKISAFFP (164 aa). Asparagine 223 provides a ligand contact to K(+). GTP contacts are provided by residues 223–228, 242–248, and 267–270; these read NAGKSS, SDIKGTT, and DTAG. Serine 227 is a binding site for Mg(2+). Residues serine 242, isoleucine 244, and threonine 247 each coordinate K(+). Mg(2+) is bound at residue threonine 248. Residue lysine 450 coordinates (6S)-5-formyl-5,6,7,8-tetrahydrofolate.

The protein belongs to the TRAFAC class TrmE-Era-EngA-EngB-Septin-like GTPase superfamily. TrmE GTPase family. In terms of assembly, homodimer. Heterotetramer of two MnmE and two MnmG subunits. It depends on K(+) as a cofactor.

It is found in the cytoplasm. Functionally, exhibits a very high intrinsic GTPase hydrolysis rate. Involved in the addition of a carboxymethylaminomethyl (cmnm) group at the wobble position (U34) of certain tRNAs, forming tRNA-cmnm(5)s(2)U34. This Helicobacter pylori (strain Shi470) protein is tRNA modification GTPase MnmE.